A 492-amino-acid polypeptide reads, in one-letter code: Ribose import ATP-binding protein RbsA (492 aa).

2 ABC transporter domains span residues 3–239 (IEMK…VGRS) and 249–492 (AEIR…TGGK). 35 to 42 (GENGAGKS) provides a ligand contact to ATP.

The protein belongs to the ABC transporter superfamily. Ribose importer (TC 3.A.1.2.1) family. As to quaternary structure, the complex is composed of an ATP-binding protein (RbsA), two transmembrane proteins (RbsC) and a solute-binding protein (RbsB).

The protein localises to the cell membrane. The catalysed reaction is D-ribose(out) + ATP + H2O = D-ribose(in) + ADP + phosphate + H(+). Part of the ABC transporter complex RbsABC involved in ribose import. Responsible for energy coupling to the transport system. This chain is Ribose import ATP-binding protein RbsA, found in Lactococcus lactis subsp. cremoris (strain SK11).